Reading from the N-terminus, the 317-residue chain is Transaldolase (317 aa).

Lys132 (schiff-base intermediate with substrate) is an active-site residue.

It belongs to the transaldolase family. Type 1 subfamily. As to quaternary structure, homodimer.

The protein resides in the cytoplasm. It carries out the reaction D-sedoheptulose 7-phosphate + D-glyceraldehyde 3-phosphate = D-erythrose 4-phosphate + beta-D-fructose 6-phosphate. It functions in the pathway carbohydrate degradation; pentose phosphate pathway; D-glyceraldehyde 3-phosphate and beta-D-fructose 6-phosphate from D-ribose 5-phosphate and D-xylulose 5-phosphate (non-oxidative stage): step 2/3. Functionally, transaldolase is important for the balance of metabolites in the pentose-phosphate pathway. This Yersinia pseudotuberculosis serotype O:3 (strain YPIII) protein is Transaldolase.